Reading from the N-terminus, the 492-residue chain is NADH-quinone oxidoreductase subunit N (492 aa).

14 consecutive transmembrane segments (helical) span residues 13 to 33, 42 to 62, 79 to 99, 111 to 131, 133 to 153, 168 to 188, 211 to 231, 251 to 271, 284 to 304, 318 to 340, 344 to 366, 388 to 408, 426 to 446, and 463 to 483; these read MMTPEFIVLGTALILSLMDLF, PLAWIAFVGVAIALIATIGLI, FGKAFKLLLLAGGALSLLLAF, GEFYYLLLCALLGAMIMASSG, LITLFVGLELLSISSYILAGI, VINGGISTAITLFGMSYIFGL, YILAIAFLMMLVGLSFKISSV, FLSVVSKTAGFVIVLRLFITI, SLLFSMQDYIAFLAGATMIIG, FAYSSIAHAGYILVGFAAMSWVM, IWFYLLAYLFMNLGAFAILQRIS, AVAMGIFLLSLAGIPGTAGFI, VLAAVMIATTVVSYVYYFGIF, and PIGLAMVVVLCALGTLLFGVV.

This sequence belongs to the complex I subunit 2 family. As to quaternary structure, NDH-1 is composed of 14 different subunits. Subunits NuoA, H, J, K, L, M, N constitute the membrane sector of the complex.

The protein resides in the cell membrane. It carries out the reaction a quinone + NADH + 5 H(+)(in) = a quinol + NAD(+) + 4 H(+)(out). In terms of biological role, NDH-1 shuttles electrons from NADH, via FMN and iron-sulfur (Fe-S) centers, to quinones in the respiratory chain. The immediate electron acceptor for the enzyme in this species is believed to be a menaquinone. Couples the redox reaction to proton translocation (for every two electrons transferred, four hydrogen ions are translocated across the cytoplasmic membrane), and thus conserves the redox energy in a proton gradient. The sequence is that of NADH-quinone oxidoreductase subunit N from Geobacillus sp. (strain WCH70).